The primary structure comprises 588 residues: Glutathione/L-cysteine transport system ATP-binding/permease protein CydD (588 aa).

Over 1–15 (MNKSRQKELTRWLKQ) the chain is Cytoplasmic. 2 helical membrane-spanning segments follow: residues 16-36 (QSVI…VSGI) and 37-57 (LIIA…MENI). The ABC transmembrane type-1 domain maps to 20 to 306 (SQRWLNISRL…APEFFQPLRD (287 aa)). Topologically, residues 58–136 (PREALLLPFT…LEQIDDMHDY (79 aa)) are cytoplasmic. Residues 137 to 157 (YARYLPQMALAVSVPLLIVVA) traverse the membrane as a helical segment. At 158–161 (IFPS) the chain is on the periplasmic side. A helical membrane pass occupies residues 162–182 (NWAAALILLGTAPLIPLFMAL). The Cytoplasmic segment spans residues 183-249 (VGMGAADANR…MEVLRLAFLS (67 aa)). Residues 250–270 (SGILEFFTSLSIALVAVYFGF) traverse the membrane as a helical segment. Topologically, residues 271–276 (SYLGEL) are periplasmic. Residues 277 to 297 (DFGHYDTGVTLAAGFLALILA) form a helical membrane-spanning segment. Residues 298–573 (PEFFQPLRDL…QGRYAELSVA (276 aa)) are Cytoplasmic-facing. The region spanning 339–572 (EAELASTDPV…EQGRYAELSV (234 aa)) is the ABC transporter domain. Residue 373–380 (LPAGQRAV) participates in ATP binding.

Belongs to the ABC transporter superfamily. Cysteine exporter (TC 3.A.1.129.1) family. In terms of assembly, forms a heterodimer with CydC.

The protein resides in the cell inner membrane. The enzyme catalyses L-cysteine(in) + ATP + H2O = L-cysteine(out) + ADP + phosphate + H(+). It carries out the reaction glutathione(in) + ATP + H2O = glutathione(out) + ADP + phosphate + H(+). Its activity is regulated as follows. ATPase activity is stimulated by various thiol compounds. The presence of heme leads to a further enhancement of thiol-stimulated ATPase activity, although a large excess of heme inhibits activity. Glutathione transport is inhibited by sodium orthovanadate, an inhibitor of ABC-type transport systems, but not by the proton ionophore carbonyl cyanide m-chlorophenylhydrazone (CCCP). Functionally, part of the ABC transporter complex CydDC that exports the reduced low-molecular-weight thiols cysteine and glutathione to the periplasm. Export of these thiol-containing redox-active molecules may be crucial for redox homeostasis in the periplasm, permitting correct assembly of various respiratory complexes and formation of correct disulfide bonds in periplasmic and secreted proteins. CydD contains transmembrane domains (TMD), which form a pore in the inner membrane, and an ATP-binding domain (NBD), which is responsible for energy generation. Required for the assembly of functional cytochrome bd-type quinol oxidases and periplasmic c-type cytochromes. Overexpression of CydDC under anaerobic conditions also results in the formation of a heme biosynthesis-derived pigment, P-574. CydDC binds heme b, but heme is probably not transported by the complex and instead has a role in regulating ATPase activity. Its function is as follows. Conversely, a more recent study suggests an alternative function of CydDC: authors suggest that CydDC does not mediate the export of L-cysteine but rather reduces cytoplasmic L-cystine to L-cysteine. The principle function of CydDC would be to maintain the reduced state of cytoplasmic L-cysteine, thereby providing an important connection between sulfur metabolism, oxidative stress and resistance to antibiotics. The sequence is that of Glutathione/L-cysteine transport system ATP-binding/permease protein CydD from Escherichia coli (strain K12).